The following is a 102-amino-acid chain: Large ribosomal subunit protein bL21 (102 aa).

This sequence belongs to the bacterial ribosomal protein bL21 family. Part of the 50S ribosomal subunit. Contacts protein L20.

In terms of biological role, this protein binds to 23S rRNA in the presence of protein L20. This chain is Large ribosomal subunit protein bL21, found in Nitratidesulfovibrio vulgaris (strain ATCC 29579 / DSM 644 / CCUG 34227 / NCIMB 8303 / VKM B-1760 / Hildenborough) (Desulfovibrio vulgaris).